We begin with the raw amino-acid sequence, 247 residues long: tRNA pseudouridine synthase A (247 aa).

Asp-52 functions as the Nucleophile in the catalytic mechanism. Tyr-113 is a binding site for substrate.

Belongs to the tRNA pseudouridine synthase TruA family. As to quaternary structure, homodimer.

It carries out the reaction uridine(38/39/40) in tRNA = pseudouridine(38/39/40) in tRNA. Functionally, formation of pseudouridine at positions 38, 39 and 40 in the anticodon stem and loop of transfer RNAs. In Sinorhizobium medicae (strain WSM419) (Ensifer medicae), this protein is tRNA pseudouridine synthase A.